Reading from the N-terminus, the 215-residue chain is Sodium channel regulatory subunit beta-3 (215 aa).

A signal peptide spans 1–22 (MPAFNRLFPLASLVLIYWVSVC). The Extracellular portion of the chain corresponds to 23–156 (FPVCVEVPSE…EEAGEDFTSV (134 aa)). Cystine bridges form between C26–C48 and C45–C120. Residues 32 to 154 (ETEAVQGNPM…VTEEAGEDFT (123 aa)) form the Ig-like C2-type domain. N-linked (GlcNAc...) asparagine glycans are attached at residues N95, N109, N113, and N121. The chain crosses the membrane as a helical span at residues 157-178 (VSEIMMYILLVFLTLWLLIEMI). Topologically, residues 179-215 (YCYRKVSKAEEAAQENASDYLAIPSENKENSAVPVEE) are cytoplasmic.

The protein belongs to the sodium channel auxiliary subunit SCN3B (TC 8.A.17) family. As to quaternary structure, a voltage-gated sodium (Nav) channel consists of an ion-conducting pore-forming alpha subunit functional on its own that is regulated by one or more beta subunits. Forms homodimers and homotrimers. SCN3B is non-covalently associated with alpha subunits and induces the formation of alpha subunit oligomers, including trimers. Interacts with SCN5A/Nav1.5; regulatory subunit of SCN5A/Nav1.5. Interacts with SCN7A/Nav2.1; probable regulatory subunit of SCN7A/Nav2.1. Interacts with SCN10A; regulatory subunit of SCN10A/Nav1.8. Interacts with NFASC; probably involved in targeting the sodium channels to the nodes of Ranvier. In terms of processing, intramolecular disulfide bonds favor the voltage-gated sodium channel oligomeric complex assembly. Post-translationally, N-glycosylated. In terms of tissue distribution, expressed in the atrium.

The protein localises to the cell membrane. In terms of biological role, regulatory subunit of multiple voltage-gated sodium (Nav) channels directly mediating the depolarization of excitable membranes. Navs, also called VGSCs (voltage-gated sodium channels) or VDSCs (voltage-dependent sodium channels), operate by switching between closed and open conformations depending on the voltage difference across the membrane. In the open conformation they allow Na(+) ions to selectively pass through the pore, along their electrochemical gradient. The influx of Na+ ions provokes membrane depolarization, initiating the propagation of electrical signals throughout cells and tissues. The accessory beta subunits participate in localization and functional modulation of the Nav channels. Modulates the activity of SCN2A/Nav1.2, causing a hyperpolarizing shift in the voltage-dependence of inactivation of the channel and increasing the fraction of channels operating in the fast gating mode. Modulates the activity of SCN5A/Nav1.5. Could also regulate the atypical sodium channel SCN7A/Nav2.1. Modulates the activity of SCN10A/Nav1.8, regulating its oligomerization and accelerating the recovery from inactivation. In Homo sapiens (Human), this protein is Sodium channel regulatory subunit beta-3.